The primary structure comprises 285 residues: Phosphatidylserine decarboxylase proenzyme (285 aa).

Active-site charge relay system; for autoendoproteolytic cleavage activity residues include Asp-89, His-146, and Ser-252. Ser-252 acts as the Schiff-base intermediate with substrate; via pyruvic acid; for decarboxylase activity in catalysis. The residue at position 252 (Ser-252) is a Pyruvic acid (Ser); by autocatalysis.

The protein belongs to the phosphatidylserine decarboxylase family. PSD-B subfamily. Prokaryotic type I sub-subfamily. As to quaternary structure, heterodimer of a large membrane-associated beta subunit and a small pyruvoyl-containing alpha subunit. Requires pyruvate as cofactor. Post-translationally, is synthesized initially as an inactive proenzyme. Formation of the active enzyme involves a self-maturation process in which the active site pyruvoyl group is generated from an internal serine residue via an autocatalytic post-translational modification. Two non-identical subunits are generated from the proenzyme in this reaction, and the pyruvate is formed at the N-terminus of the alpha chain, which is derived from the carboxyl end of the proenzyme. The autoendoproteolytic cleavage occurs by a canonical serine protease mechanism, in which the side chain hydroxyl group of the serine supplies its oxygen atom to form the C-terminus of the beta chain, while the remainder of the serine residue undergoes an oxidative deamination to produce ammonia and the pyruvoyl prosthetic group on the alpha chain. During this reaction, the Ser that is part of the protease active site of the proenzyme becomes the pyruvoyl prosthetic group, which constitutes an essential element of the active site of the mature decarboxylase.

It localises to the cell membrane. It catalyses the reaction a 1,2-diacyl-sn-glycero-3-phospho-L-serine + H(+) = a 1,2-diacyl-sn-glycero-3-phosphoethanolamine + CO2. The protein operates within phospholipid metabolism; phosphatidylethanolamine biosynthesis; phosphatidylethanolamine from CDP-diacylglycerol: step 2/2. In terms of biological role, catalyzes the formation of phosphatidylethanolamine (PtdEtn) from phosphatidylserine (PtdSer). This Vibrio vulnificus (strain CMCP6) protein is Phosphatidylserine decarboxylase proenzyme.